The following is an 806-amino-acid chain: Leucine--tRNA ligase (806 aa).

The 'HIGH' region motif lies at 40-51 (PYPSGAGLHVGH). Residues 576 to 580 (KMSKS) carry the 'KMSKS' region motif. Lys579 is a binding site for ATP.

It belongs to the class-I aminoacyl-tRNA synthetase family.

The protein localises to the cytoplasm. It carries out the reaction tRNA(Leu) + L-leucine + ATP = L-leucyl-tRNA(Leu) + AMP + diphosphate. This chain is Leucine--tRNA ligase, found in Halalkalibacterium halodurans (strain ATCC BAA-125 / DSM 18197 / FERM 7344 / JCM 9153 / C-125) (Bacillus halodurans).